The following is a 357-amino-acid chain: Poly(3-hydroxyalkanoate) polymerase subunit PhaE (357 aa).

The tract at residues 320–357 (AALAGEEPATKPATALRSPAPAAKAPARRRTTKTNPAD) is disordered. Positions 331–344 (PATALRSPAPAAKA) are enriched in low complexity.

This sequence belongs to the PHA/PHB synthase family. Type III PhaE subfamily. As to quaternary structure, a large complex of PhaC and PhaE; the ratio of the subunits has been estimated to be from 1:1 to 4:1, with more PhaE than PhaC.

The protein localises to the cytoplasm. Its pathway is biopolymer metabolism; poly-(R)-3-hydroxybutanoate biosynthesis. Functionally, polymerizes D(-)-3-hydroxybutyryl-CoA to create polyhydroxybutyrate (PHB) which consists of thousands of hydroxybutyrate molecules linked end to end. This subunit has no catalytic activity but enhances the activity of PhaC, the catalytic subunit, 100-fold. This Allochromatium vinosum (strain ATCC 17899 / DSM 180 / NBRC 103801 / NCIMB 10441 / D) (Chromatium vinosum) protein is Poly(3-hydroxyalkanoate) polymerase subunit PhaE.